The primary structure comprises 480 residues: Altronate oxidoreductase (480 aa).

Isoleucine 19–glycine 30 serves as a coordination point for NAD(+).

It belongs to the mannitol dehydrogenase family. UxaB subfamily.

It catalyses the reaction D-altronate + NAD(+) = keto-D-tagaturonate + NADH + H(+). The protein operates within carbohydrate metabolism; pentose and glucuronate interconversion. In Bacillus subtilis (strain 168), this protein is Altronate oxidoreductase.